The sequence spans 421 residues: UDP-N-acetylglucosamine 1-carboxyvinyltransferase (421 aa).

22–23 (KN) contributes to the phosphoenolpyruvate binding site. Arg92 contributes to the UDP-N-acetyl-alpha-D-glucosamine binding site. Cys116 functions as the Proton donor in the catalytic mechanism. The residue at position 116 (Cys116) is a 2-(S-cysteinyl)pyruvic acid O-phosphothioketal. Residues 121–125 (RPVDQ), Asp308, and Ile330 each bind UDP-N-acetyl-alpha-D-glucosamine.

Belongs to the EPSP synthase family. MurA subfamily.

It localises to the cytoplasm. The enzyme catalyses phosphoenolpyruvate + UDP-N-acetyl-alpha-D-glucosamine = UDP-N-acetyl-3-O-(1-carboxyvinyl)-alpha-D-glucosamine + phosphate. It functions in the pathway cell wall biogenesis; peptidoglycan biosynthesis. In terms of biological role, cell wall formation. Adds enolpyruvyl to UDP-N-acetylglucosamine. The sequence is that of UDP-N-acetylglucosamine 1-carboxyvinyltransferase from Ralstonia nicotianae (strain ATCC BAA-1114 / GMI1000) (Ralstonia solanacearum).